We begin with the raw amino-acid sequence, 118 residues long: Peptidyl-tRNA hydrolase (118 aa).

Belongs to the PTH2 family.

The protein resides in the cytoplasm. The catalysed reaction is an N-acyl-L-alpha-aminoacyl-tRNA + H2O = an N-acyl-L-amino acid + a tRNA + H(+). Its function is as follows. The natural substrate for this enzyme may be peptidyl-tRNAs which drop off the ribosome during protein synthesis. The chain is Peptidyl-tRNA hydrolase from Thermococcus onnurineus (strain NA1).